Consider the following 513-residue polypeptide: Na(+)/H(+) antiporter NhaB (513 aa).

The next 12 helical transmembrane spans lie at 23–43 (LALI…PFVA), 52–72 (IFTL…LLAI), 97–117 (LLLM…LFIF), 120–140 (LLLS…AAAF), 144–164 (FLDA…FYGI), 202–222 (LMMH…VGEP), 238–258 (FFLR…LTCL), 303–323 (AIIG…VGLI), 348–368 (TESL…AVII), 391–411 (LFYI…VGTI), 447–467 (ATPN…APLI), and 475–495 (VWMA…CVEF).

It belongs to the NhaB Na(+)/H(+) (TC 2.A.34) antiporter family.

The protein resides in the cell inner membrane. It carries out the reaction 2 Na(+)(in) + 3 H(+)(out) = 2 Na(+)(out) + 3 H(+)(in). Its function is as follows. Na(+)/H(+) antiporter that extrudes sodium in exchange for external protons. The chain is Na(+)/H(+) antiporter NhaB from Shigella flexneri serotype 5b (strain 8401).